Here is a 377-residue protein sequence, read N- to C-terminus: ATP synthase gamma chain, chloroplastic (377 aa).

The N-terminal 55 residues, 1-55 (MSCSNLTMLVSSKPSLSDSSALSFRSSVSPFQLPNHNTSGPSNPSRSSSVTPVHC), are a transit peptide targeting the chloroplast. The tract at residues 30 to 52 (PFQLPNHNTSGPSNPSRSSSVTP) is disordered. A compositionally biased stretch (low complexity) spans 37–52 (NTSGPSNPSRSSSVTP). Cysteine 143 is a catalytic residue. A disulfide bond links cysteine 253 and cysteine 259.

The protein belongs to the ATPase gamma chain family. F-type ATPases have 2 components, CF(1) - the catalytic core - and CF(0) - the membrane proton channel. CF(1) has five subunits: alpha(3), beta(3), gamma(1), delta(1), epsilon(1). CF(0) has four main subunits: a, b, b' and c.

It localises to the plastid. Its subcellular location is the chloroplast thylakoid membrane. In terms of biological role, produces ATP from ADP in the presence of a proton gradient across the membrane. The gamma chain is believed to be important in regulating ATPase activity and the flow of protons through the CF(0) complex. This Nicotiana tabacum (Common tobacco) protein is ATP synthase gamma chain, chloroplastic (ATPC).